Here is a 944-residue protein sequence, read N- to C-terminus: 2-oxoglutarate dehydrogenase E1 component (944 aa).

The tract at residues arginine 914–asparagine 944 is disordered. Positions proline 925–valine 936 are enriched in basic and acidic residues.

It belongs to the alpha-ketoglutarate dehydrogenase family. As to quaternary structure, homodimer. Part of the 2-oxoglutarate dehydrogenase (OGDH) complex composed of E1 (2-oxoglutarate dehydrogenase), E2 (dihydrolipoamide succinyltransferase) and E3 (dihydrolipoamide dehydrogenase); the complex contains multiple copies of the three enzymatic components (E1, E2 and E3). Requires thiamine diphosphate as cofactor.

It carries out the reaction N(6)-[(R)-lipoyl]-L-lysyl-[protein] + 2-oxoglutarate + H(+) = N(6)-[(R)-S(8)-succinyldihydrolipoyl]-L-lysyl-[protein] + CO2. In terms of biological role, E1 component of the 2-oxoglutarate dehydrogenase (OGDH) complex which catalyzes the decarboxylation of 2-oxoglutarate, the first step in the conversion of 2-oxoglutarate to succinyl-CoA and CO(2). The sequence is that of 2-oxoglutarate dehydrogenase E1 component from Bacillus subtilis (strain 168).